The primary structure comprises 38 residues: Photosystem II reaction center protein L (38 aa).

Residues 17–37 (SLFWGLLLIFVLAVLFSSYFF) form a helical membrane-spanning segment.

This sequence belongs to the PsbL family. As to quaternary structure, PSII is composed of 1 copy each of membrane proteins PsbA, PsbB, PsbC, PsbD, PsbE, PsbF, PsbH, PsbI, PsbJ, PsbK, PsbL, PsbM, PsbT, PsbX, PsbY, PsbZ, Psb30/Ycf12, at least 3 peripheral proteins of the oxygen-evolving complex and a large number of cofactors. It forms dimeric complexes.

The protein resides in the plastid. The protein localises to the chloroplast thylakoid membrane. One of the components of the core complex of photosystem II (PSII). PSII is a light-driven water:plastoquinone oxidoreductase that uses light energy to abstract electrons from H(2)O, generating O(2) and a proton gradient subsequently used for ATP formation. It consists of a core antenna complex that captures photons, and an electron transfer chain that converts photonic excitation into a charge separation. This subunit is found at the monomer-monomer interface and is required for correct PSII assembly and/or dimerization. This Zygnema circumcarinatum (Green alga) protein is Photosystem II reaction center protein L.